Consider the following 533-residue polypeptide: Methyl-accepting chemotaxis protein IV (533 aa).

The Cytoplasmic segment spans residues 1–6; it reads MFNRIR. Residues 7–33 traverse the membrane as a helical segment; that stretch reads ISTTLFLILILCGILQIGSNGMSFWAF. Over 34–188 the chain is Periplasmic; sequence RDDLQRLNQV…AQSQRNYQIS (155 aa). Residues 189 to 209 form a helical membrane-spanning segment; it reads ALVFISMIIVAAIYISSALWW. At 210–533 the chain is on the cytoplasmic side; that stretch reads TRKMIVQPLA…VQLQIAPVVS (324 aa). One can recognise an HAMP domain in the interval 212 to 264; sequence KMIVQPLAIIGSHFDSIAAGNLARPIAVYGRNEITAIFASLKTMQQALRGTVS. In terms of domain architecture, Methyl-accepting transducer spans 269–498; that stretch reads GSQEMHIGIA…EAAVATEQLA (230 aa). A glutamate methyl ester (Gln) mark is found at glutamine 293, glutamine 300, and glutamine 307. Glutamate 489 bears the Glutamate methyl ester (Glu) mark.

This sequence belongs to the methyl-accepting chemotaxis (MCP) protein family.

The protein resides in the cell inner membrane. Functionally, mediates taxis toward dipeptides via an interaction with the periplasmic dipeptide-binding protein. In terms of biological role, chemotactic-signal transducers respond to changes in the concentration of attractants and repellents in the environment, transduce a signal from the outside to the inside of the cell, and facilitate sensory adaptation through the variation of the level of methylation. Attractants increase the level of methylation while repellents decrease the level of methylation, the methyl groups are added by the methyltransferase CheR and removed by the methylesterase CheB. The chain is Methyl-accepting chemotaxis protein IV (tap) from Escherichia coli (strain K12).